Here is a 484-residue protein sequence, read N- to C-terminus: tRNA sulfurtransferase (484 aa).

Residues 63–167 (REMIERLTCT…LDRLFVIHRQ (105 aa)) form the THUMP domain. Residues 185–186 (LM), Lys-267, Gly-289, and Gln-298 contribute to the ATP site. Cys-346 and Cys-457 are disulfide-bonded. One can recognise a Rhodanese domain in the interval 405-483 (VLPGQIVIDI…GHTNVRVYRP (79 aa)). Cys-457 serves as the catalytic Cysteine persulfide intermediate.

This sequence belongs to the ThiI family.

It is found in the cytoplasm. The catalysed reaction is [ThiI sulfur-carrier protein]-S-sulfanyl-L-cysteine + a uridine in tRNA + 2 reduced [2Fe-2S]-[ferredoxin] + ATP + H(+) = [ThiI sulfur-carrier protein]-L-cysteine + a 4-thiouridine in tRNA + 2 oxidized [2Fe-2S]-[ferredoxin] + AMP + diphosphate. It carries out the reaction [ThiS sulfur-carrier protein]-C-terminal Gly-Gly-AMP + S-sulfanyl-L-cysteinyl-[cysteine desulfurase] + AH2 = [ThiS sulfur-carrier protein]-C-terminal-Gly-aminoethanethioate + L-cysteinyl-[cysteine desulfurase] + A + AMP + 2 H(+). It participates in cofactor biosynthesis; thiamine diphosphate biosynthesis. Catalyzes the ATP-dependent transfer of a sulfur to tRNA to produce 4-thiouridine in position 8 of tRNAs, which functions as a near-UV photosensor. Also catalyzes the transfer of sulfur to the sulfur carrier protein ThiS, forming ThiS-thiocarboxylate. This is a step in the synthesis of thiazole, in the thiamine biosynthesis pathway. The sulfur is donated as persulfide by IscS. This chain is tRNA sulfurtransferase, found in Pseudomonas paraeruginosa (strain DSM 24068 / PA7) (Pseudomonas aeruginosa (strain PA7)).